Consider the following 220-residue polypeptide: Glycerol-3-phosphate acyltransferase (220 aa).

6 consecutive transmembrane segments (helical) span residues 11 to 31 (INVI…GYAL), 70 to 90 (LLVL…SKLF), 96 to 116 (LQWM…FLNF), 127 to 147 (GSVV…WFFV), 153 to 173 (ISSL…FFVP), and 192 to 212 (PMVL…FNLL).

This sequence belongs to the PlsY family. Probably interacts with PlsX.

It localises to the cell inner membrane. It catalyses the reaction an acyl phosphate + sn-glycerol 3-phosphate = a 1-acyl-sn-glycero-3-phosphate + phosphate. It participates in lipid metabolism; phospholipid metabolism. Its function is as follows. Catalyzes the transfer of an acyl group from acyl-phosphate (acyl-PO(4)) to glycerol-3-phosphate (G3P) to form lysophosphatidic acid (LPA). This enzyme utilizes acyl-phosphate as fatty acyl donor, but not acyl-CoA or acyl-ACP. The polypeptide is Glycerol-3-phosphate acyltransferase (Helicobacter pylori (strain J99 / ATCC 700824) (Campylobacter pylori J99)).